The chain runs to 216 residues: Thymidylate kinase (216 aa).

10 to 17 provides a ligand contact to ATP; that stretch reads GPDGAGKS.

The protein belongs to the thymidylate kinase family.

It catalyses the reaction dTMP + ATP = dTDP + ADP. Its function is as follows. Phosphorylation of dTMP to form dTDP in both de novo and salvage pathways of dTTP synthesis. This Lactobacillus acidophilus (strain ATCC 700396 / NCK56 / N2 / NCFM) protein is Thymidylate kinase.